The following is a 111-amino-acid chain: Regulator of ribonuclease activity B (111 aa).

It belongs to the RraB family. As to quaternary structure, interacts with the C-terminal region of Rne.

It is found in the cytoplasm. Its function is as follows. Globally modulates RNA abundance by binding to RNase E (Rne) and regulating its endonucleolytic activity. Can modulate Rne action in a substrate-dependent manner by altering the composition of the degradosome. The chain is Regulator of ribonuclease activity B from Pseudoalteromonas translucida (strain TAC 125).